The primary structure comprises 355 residues: Elongation factor Ts (355 aa).

An involved in Mg(2+) ion dislocation from EF-Tu region spans residues 82 to 85 (TDFV).

Belongs to the EF-Ts family.

It localises to the cytoplasm. Its function is as follows. Associates with the EF-Tu.GDP complex and induces the exchange of GDP to GTP. It remains bound to the aminoacyl-tRNA.EF-Tu.GTP complex up to the GTP hydrolysis stage on the ribosome. The chain is Elongation factor Ts from Helicobacter pylori (strain Shi470).